The chain runs to 161 residues: Probable endopeptidase HI_1314 (161 aa).

The N-terminal stretch at 1–18 (MKVYKSFLIATASLFLFA) is a signal peptide. C19 carries the N-palmitoyl cysteine lipid modification. C19 is lipidated: S-diacylglycerol cysteine. Residues 39–161 (IMAIAMLSEQ…SKAFWQVRRI (123 aa)) form the NlpC/P60 domain. The Nucleophile role is filled by C69. Catalysis depends on H122, which acts as the Proton acceptor. H134 is an active-site residue.

This sequence belongs to the peptidase C40 family.

The protein resides in the cell membrane. The polypeptide is Probable endopeptidase HI_1314 (Haemophilus influenzae (strain ATCC 51907 / DSM 11121 / KW20 / Rd)).